The chain runs to 341 residues: HTH-type transcriptional repressor PurR (341 aa).

Residues Ala-2 to Val-56 form the HTH lacI-type domain. The H-T-H motif DNA-binding region spans Ile-4–Asn-23. Residues Ser-48–Val-56 mediate DNA binding. Hypoxanthine is bound by residues Tyr-73, Arg-190, Thr-192, Phe-221, and Asp-275.

In terms of assembly, homodimer.

Its pathway is purine metabolism; purine nucleotide biosynthesis [regulation]. In terms of biological role, is the main repressor of the genes involved in the de novo synthesis of purine nucleotides, regulating purB, purC, purEK, purF, purHD, purL, purMN and guaBA expression. PurR is allosterically activated to bind its cognate DNA by binding the purine corepressors, hypoxanthine or guanine, thereby effecting transcription repression. The chain is HTH-type transcriptional repressor PurR from Yersinia pseudotuberculosis serotype O:1b (strain IP 31758).